Reading from the N-terminus, the 92-residue chain is RIIa domain-containing protein 1 (92 aa).

In terms of domain architecture, RIIa spans 43-77; it reads KEVELLISGFFREMFLKRPDNIPEFAADYFTDPRL.

This is RIIa domain-containing protein 1 (RIIAD1) from Bos taurus (Bovine).